A 301-amino-acid polypeptide reads, in one-letter code: Probable alpha-L-glutamate ligase (301 aa).

The region spanning 104 to 287 is the ATP-grasp domain; the sequence is HQLLAAQGID…VAIKIVHHVE (184 aa). ATP contacts are provided by residues Lys141, 178-179, Asp187, and 211-213; these read EF and RSN. Positions 248, 260, and 262 each coordinate Mg(2+). Mn(2+) is bound by residues Asp248, Glu260, and Asn262.

It belongs to the RimK family. It depends on Mg(2+) as a cofactor. Mn(2+) serves as cofactor.

This Xylella fastidiosa (strain M12) protein is Probable alpha-L-glutamate ligase.